A 1553-amino-acid chain; its full sequence is MELLDSPAPLRPLHDNPRLPKADGAQKRLSVERIYQKKTQLEHILLRPDTYIGSVETVTQQMWVFDEDVGLNCRDVTFVPGLYKIFDEILVNAADNKQRDKSMSCIKVTIDPENNTISVWNNGKGIPVVEHKVEKVYVPALIFGQLLTSSNYDDDEKKVTGGRNGYGAKLCNIFSTKFTVETACREYKKLFKQTWTDNMGKAGEMTLKHFDGEDYTCVTFQPDLSKFKMTILDKDIVALMSRRAYDIAGSTKDVKVFLNGKRLPVKGFRSYVDLYLKDKVDETGNALKVIHEEVNSRWEVCLTLSEKGFQQVSFVNSIATTKGGRHVDYVADQIVTKLIDVVKKKNKNGVGVKPFQVKNHMWIFVNSLIENPTFDSQTKENMTLQAKSFGSTCKLSEKFIKGAVGCGIVESILNWVKFKAQTQLNKKCSAVKHTKIKGVPKLDDANDAGSKNSIDCTLILTEGDSAKTLAVSGLGVVGRDKYGVFPLRGKMLNVREASHKQIMENAEINNIIKIVGLQYKKNYEDRESLKSLRYGKIMIMTDQDQDGSHIKGLLINFIHHNWPSLLRHNFLEEFITPIIKVSKNKEEIPFYSIPEFEEWKSSTQNYNSWKIKYYKGLGTSTSKEAKEYFADMARHRIGFKYSGPEDDAAITLAFSKKKVEERKEWLTNFMEDRRQRNVHGLPEDYLYGKDTNYLTYNDFINKELVLFSNSDNERSIPSLVDGLKPGQRKVLFTCFKRNDKREVKGAQLAGSVAEMSSYHHGEASLMMTIINLAQNFVGSNNLNLLQPIGQFGTRLHGGKDSASPRYIFTMLSPLARLLFPPVDDNVLRFLYDDNQRVEPEWYMPIIPMVLINGAEGIGTGWSCKIPNFDIRETVNNIRCLLDGKEPLPMLPSYKNFKGTIDELGPNQYVISGEVSILDSTTIEITELPVRTWTQTYKEQVLEPMLNGTEKTPPLITDYKEYHTDTTVKFVVKMSEEKLAEAEAVGLHKVFKLQTNLTCNSMVLFDHVGFLKKYESPQDILKEFFELRLRYYGLRKEWLIGMLGAESAKLNNQARFILEKIDGKIVIENKPKKELIQVLIQRGYESDPVKAWKELQNKEEEEGDESGEESAAATGPDFNYLLNMPLWYLTKEKKDELCKQRDNKDKELEDLKHKSPSDLWKEDLAAFVEELDAVEAKQMQDEMAGITGKPLKVKGGKQGGKQKVTKAQLAEVMPSPHGIRVVPRVTAEMKAEAEKRIKKKIKSEKNESDEKQEGNSSGDKEPSSLKQRLAQKRKAEQGTKRQTTLPFKPIKKMKRNPWSDSESDSESDDFEVPSKRERVVRQAAAKIKPMVNSDSDADLTSSDEDSEYQENSEGNTDSDTTSKKKPPKAKAVPKEKKGKAPKEKPLPDAVPVRVQNVAAESASQDPAAPPVSVPRAQAVPKKPAAAKKGSTAKDNQPSIMDILTKKKAAPKAPRRAQREESPPSEATAAVAKKPGPPRGRKATKRLTSSSDSDSDFGSRPSKSVAAKKSKRDDDDSYSIDLTADSPAAAAPRTRPGRLKKPVQYLESSDEDDMF.

The interval 1 to 25 is disordered; sequence MELLDSPAPLRPLHDNPRLPKADGA. The span at 12–25 shows a compositional bias: basic and acidic residues; sequence PLHDNPRLPKADGA. ATP-binding positions include asparagine 92, asparagine 121, 149 to 151, and 162 to 169; these read SSN and GRNGYGAK. The interaction with DNA stretch occupies residues 343–345; it reads KKK. 377–379 is a binding site for ATP; that stretch reads QTK. Residues 456 to 573 enclose the Toprim domain; that stretch reads CTLILTEGDS…SLLRHNFLEE (118 aa). Residues glutamate 462, aspartate 542, and aspartate 544 each coordinate Mg(2+). Residues 716 to 1163 form the Topo IIA-type catalytic domain; that stretch reads IPSLVDGLKP…SPSDLWKEDL (448 aa). Tyrosine 806 (O-(5'-phospho-DNA)-tyrosine intermediate) is an active-site residue. The segment at 991–1000 is interaction with DNA; it reads KLQTNLTCNS. 2 disordered regions span residues 1095-1114 and 1186-1553; these read QNKE…AATG and TGKP…DDMF. Residues 1098–1107 are compositionally biased toward acidic residues; the sequence is EEEEGDESGE. Residues 1242–1262 are compositionally biased toward basic and acidic residues; it reads SEKNESDEKQEGNSSGDKEPS. Composition is skewed to acidic residues over residues 1300-1310 and 1334-1349; these read SESDSESDDFE and SDAD…EYQE. A compositionally biased stretch (basic and acidic residues) spans 1371 to 1385; that stretch reads VPKEKKGKAPKEKPL. Residues 1413–1432 are compositionally biased toward low complexity; the sequence is PRAQAVPKKPAAAKKGSTAK. Positions 1444-1454 are enriched in basic residues; sequence KKKAAPKAPRR. Low complexity predominate over residues 1517–1532; that stretch reads SIDLTADSPAAAAPRT.

It belongs to the type II topoisomerase family. Homodimer. Requires Mg(2+) as cofactor. Mn(2+) is required as a cofactor. It depends on Ca(2+) as a cofactor.

The protein resides in the cytoplasm. It is found in the nucleus. It localises to the nucleoplasm. Its subcellular location is the nucleolus. It catalyses the reaction ATP-dependent breakage, passage and rejoining of double-stranded DNA.. In terms of biological role, key decatenating enzyme that alters DNA topology by binding to two double-stranded DNA molecules, generating a double-stranded break in one of the strands, passing the intact strand through the broken strand, and religating the broken strand. May play a role in the regulation of circadian rhythm. The polypeptide is DNA topoisomerase 2-alpha (TOP2A) (Gallus gallus (Chicken)).